We begin with the raw amino-acid sequence, 710 residues long: Amyloid beta precursor protein binding family B member 1 (710 aa).

Over residues 1–15 the composition is skewed to polar residues; the sequence is MSVPSSLSQSAINAN. Disordered regions lie at residues 1–24, 131–254, 276–299, and 340–365; these read MSVP…ALSL, GLRG…TDSD, GTTQ…EESQ, and TFPA…NTNP. Over residues 145 to 173 the composition is skewed to acidic residues; the sequence is GPDEGEEKAAGEAEEEEEDDDDEEEEEDL. At Lys204 the chain carries N6-acetyllysine. Residues 223 to 234 show a composition bias toward polar residues; that stretch reads SWATLSQGSPSY. In terms of domain architecture, WW spans 253–285; sequence SDLPAGWMRVQDTSGTYYWHIPTGTTQWEPPGR. Residues 287–299 are compositionally biased toward low complexity; it reads SPSQGSSPQEESQ. The region spanning 370–509 is the PID 1 domain; the sequence is FAVRSLGWVE…SKIMAERRNA (140 aa). A Phosphoserine; by PKC modification is found at Ser459. The residue at position 517 (Ser517) is a Phosphoserine. In terms of domain architecture, PID 2 spans 542–699; it reads KFQVYYLGNV…RRGVQSLWGS (158 aa). The residue at position 547 (Tyr547) is a Phosphotyrosine; by ABL1. Ser610 carries the post-translational modification Phosphoserine; by SGK1. Lys701 carries the post-translational modification N6-acetyllysine.

As to quaternary structure, component of a complex, at least composed of APBB1, RASD1/DEXRAS1 and APP. Interacts (via PID domain 2) with APP (with the intracellular domain of the amyloid-beta precursor protein). Interacts (via PID domain 2) with RASD1/DEXRAS1; impairs the transcription activation activity. Interacts (via PID domain 1) with KAT5/TIP60. Interacts (via the WW domain) with the proline-rich region of APBB1IP. Interacts with TSHZ1 and TSHZ2. Interacts (via the WW domain) with histone H2AX (when phosphorylated on 'Tyr-142') and the proline-rich region of ENAH. Interacts with MAPK8. Interacts (via PID domain 1) with TSHZ3 (via homeobox domain). Interacts with SET. Found in a trimeric complex with HDAC1 and TSHZ3; the interaction between HDAC1 and APBB1 is mediated by TSHZ3. Interacts (via WWW domain) with NEK6. Interacts (via WWW domain) with ABL1. Interacts with RNF157. Interacts with ARF6. Post-translationally, phosphorylation at Ser-610 by SGK1 promotes its localization to the nucleus. Phosphorylated following nuclear translocation. Phosphorylation at Tyr-547 by ABL1 enhances transcriptional activation activity and reduces the affinity for RASD1/DEXRAS1. Phosphorylated at Ser-459 by PKC upon insulin activation. In terms of processing, acetylation at Lys-204 and Lys-701 by KAT5 promotes its transcription activator activity. Polyubiquitination by RNF157 leads to degradation by the proteasome. In terms of tissue distribution, highly expressed in brain; strongly reduced in post-mortem elderly subjects with Alzheimer disease. As to expression, expressed preferentially in the brain.

The protein resides in the cell membrane. The protein localises to the cytoplasm. It is found in the nucleus. It localises to the cell projection. Its subcellular location is the growth cone. The protein resides in the nucleus speckle. Functionally, transcription coregulator that can have both coactivator and corepressor functions. Adapter protein that forms a transcriptionally active complex with the gamma-secretase-derived amyloid precursor protein (APP) intracellular domain. Plays a central role in the response to DNA damage by translocating to the nucleus and inducing apoptosis. May act by specifically recognizing and binding histone H2AX phosphorylated on 'Tyr-142' (H2AXY142ph) at double-strand breaks (DSBs), recruiting other pro-apoptosis factors such as MAPK8/JNK1. Required for histone H4 acetylation at double-strand breaks (DSBs). Its ability to specifically bind modified histones and chromatin modifying enzymes such as KAT5/TIP60, probably explains its transcription activation activity. Functions in association with TSHZ3, SET and HDAC factors as a transcriptional repressor, that inhibits the expression of CASP4. Associates with chromatin in a region surrounding the CASP4 transcriptional start site(s). Involved in hippocampal neurite branching and neuromuscular junction formation, as a result plays a role in spatial memory functioning. Plays a role in the maintenance of lens transparency. May play a role in muscle cell strength. Acts as a molecular adapter that functions in neurite outgrowth by activating the RAC1-ARF6 axis upon insulin treatment. In Homo sapiens (Human), this protein is Amyloid beta precursor protein binding family B member 1.